We begin with the raw amino-acid sequence, 185 residues long: Elongation factor P (185 aa).

This sequence belongs to the elongation factor P family.

Its subcellular location is the cytoplasm. It functions in the pathway protein biosynthesis; polypeptide chain elongation. In terms of biological role, involved in peptide bond synthesis. Stimulates efficient translation and peptide-bond synthesis on native or reconstituted 70S ribosomes in vitro. Probably functions indirectly by altering the affinity of the ribosome for aminoacyl-tRNA, thus increasing their reactivity as acceptors for peptidyl transferase. The chain is Elongation factor P from Acetivibrio thermocellus (strain ATCC 27405 / DSM 1237 / JCM 9322 / NBRC 103400 / NCIMB 10682 / NRRL B-4536 / VPI 7372) (Clostridium thermocellum).